We begin with the raw amino-acid sequence, 399 residues long: 1-deoxy-D-xylulose 5-phosphate reductoisomerase (399 aa).

Thr13, Gly14, Ser15, Ile16, and Asn127 together coordinate NADPH. 1-deoxy-D-xylulose 5-phosphate is bound at residue Lys128. Glu129 provides a ligand contact to NADPH. Residue Asp153 participates in Mn(2+) binding. 1-deoxy-D-xylulose 5-phosphate is bound by residues Ser154, Glu155, Ser187, and His210. Glu155 contributes to the Mn(2+) binding site. Residue Gly216 coordinates NADPH. Ser223, Asn228, Lys229, and Glu232 together coordinate 1-deoxy-D-xylulose 5-phosphate. A Mn(2+)-binding site is contributed by Glu232.

This sequence belongs to the DXR family. The cofactor is Mg(2+). Mn(2+) is required as a cofactor.

The catalysed reaction is 2-C-methyl-D-erythritol 4-phosphate + NADP(+) = 1-deoxy-D-xylulose 5-phosphate + NADPH + H(+). The protein operates within isoprenoid biosynthesis; isopentenyl diphosphate biosynthesis via DXP pathway; isopentenyl diphosphate from 1-deoxy-D-xylulose 5-phosphate: step 1/6. Functionally, catalyzes the NADPH-dependent rearrangement and reduction of 1-deoxy-D-xylulose-5-phosphate (DXP) to 2-C-methyl-D-erythritol 4-phosphate (MEP). The polypeptide is 1-deoxy-D-xylulose 5-phosphate reductoisomerase (Bordetella parapertussis (strain 12822 / ATCC BAA-587 / NCTC 13253)).